A 133-amino-acid chain; its full sequence is Brain natriuretic peptide (133 aa).

A signal peptide spans 1 to 22 (MVVSFVSICGLLLIFNLPLSTS). Acidic residues predominate over residues 44–53 (SMSEETEEDQ). Disordered stretches follow at residues 44–76 (SMSE…NRDQ) and 93–112 (TRKN…FGRR). Residues cysteine 108 and cysteine 124 are joined by a disulfide bond.

It belongs to the natriuretic peptide family.

It localises to the secreted. Cardiac hormone which may function as a paracrine antifibrotic factor in the heart. Also plays a key role in cardiovascular homeostasis through natriuresis, diuresis, vasorelaxation, and inhibition of renin and aldosterone secretion. Has a cGMP-stimulating activity. The chain is Brain natriuretic peptide (nppb) from Takifugu rubripes (Japanese pufferfish).